A 57-amino-acid chain; its full sequence is uncharacterized protein (57 aa).

The disordered stretch occupies residues 34-57; it reads QGKRGETEGQIEISRKAGHPAPAF.

This is an uncharacterized protein from Saccharomyces cerevisiae (strain ATCC 204508 / S288c) (Baker's yeast).